A 131-amino-acid polypeptide reads, in one-letter code: Proline-rich protein 3 (131 aa).

The interval 1–77 (LHRGPPGSRG…KEQRNPRRLK (77 aa)) is disordered. The segment covering 12 to 25 (MIPPLLSLPPPPRG) has biased composition (pro residues). The span at 28 to 44 (PLRGGLGPRSGPYGRGW) shows a compositional bias: gly residues. The segment at 98–126 (KSDRPVCRHFAKKGHCRYEDLCAFYHPGA) adopts a C3H1-type zinc-finger fold.

The protein is Proline-rich protein 3 (PRR3) of Sus scrofa (Pig).